We begin with the raw amino-acid sequence, 622 residues long: UvrABC system protein C (622 aa).

The GIY-YIG domain maps to 13–92 (DKPGVYLMKN…IKENRPKYNV (80 aa)). In terms of domain architecture, UVR spans 205-240 (DELIKKIEEKMKRAAEKMDFEGAAHYRDQRQALLDI).

The protein belongs to the UvrC family. Interacts with UvrB in an incision complex.

It localises to the cytoplasm. In terms of biological role, the UvrABC repair system catalyzes the recognition and processing of DNA lesions. UvrC both incises the 5' and 3' sides of the lesion. The N-terminal half is responsible for the 3' incision and the C-terminal half is responsible for the 5' incision. In Alkaliphilus metalliredigens (strain QYMF), this protein is UvrABC system protein C.